The chain runs to 431 residues: Mannan endo-1,4-beta-mannosidase 7 (431 aa).

The signal sequence occupies residues 1-25 (MKLLALFPFLAIVIQLSCWELGTDA). Residues Trp-87 and Asn-202 each coordinate substrate. Catalysis depends on Glu-203, which acts as the Proton donor. Position 280 (Tyr-280) interacts with substrate. Glu-320 acts as the Nucleophile in catalysis. Trp-362 contributes to the substrate binding site.

This sequence belongs to the glycosyl hydrolase 5 (cellulase A) family. As to expression, expressed in stems, flowers, siliques and seeds. Expressed in root vasculature, leaf hydathodes, anther filaments, stigma, sepal vasculature, at the base and apical parts of siliques, and replum. Expressed in the micropylar endosperm and radicle tip in early germinating seeds.

It localises to the secreted. It catalyses the reaction Random hydrolysis of (1-&gt;4)-beta-D-mannosidic linkages in mannans, galactomannans and glucomannans.. Functionally, required for both, loosening of the micropylar endosperm, and rupture of the seed coat in germinating seeds. May participate in the hydrolysis of the mannans in the cell wall of germinating seeds. The chain is Mannan endo-1,4-beta-mannosidase 7 (MAN7) from Arabidopsis thaliana (Mouse-ear cress).